Here is a 385-residue protein sequence, read N- to C-terminus: SH3 domain-binding protein 5-like (385 aa).

Positions 1–58 (MAELRQIPGGRETPQGELRPEVVEDEVPRSPVAEEPGGGGSNSSEAKLSPREEEELDP) are disordered. T13 carries the post-translational modification Phosphothreonine. Over residues 18–28 (LRPEVVEDEVP) the composition is skewed to basic and acidic residues. Phosphoserine occurs at positions 30 and 49. Coiled coils occupy residues 59 to 140 (RIQE…YERA) and 169 to 272 (WQEM…EQIH). The disordered stretch occupies residues 272–328 (HARRRGQPAHTPGQRRSSPVGAEAGPDGGEDADSGIIEGAEGGGLEEGVSLGPGAAP). Low complexity predominate over residues 318 to 328 (EGVSLGPGAAP). Phosphoserine occurs at positions 343, 350, 358, and 362. The disordered stretch occupies residues 359–385 (DHTSLDGQELGPRSGGRGGRHQRSISL). Basic residues predominate over residues 376–385 (GGRHQRSISL).

Belongs to the SH3BP5 family.

In terms of biological role, functions as a guanine nucleotide exchange factor (GEF) for RAB11A. This is SH3 domain-binding protein 5-like (SH3BP5L) from Bos taurus (Bovine).